A 623-amino-acid polypeptide reads, in one-letter code: V-type proton ATPase catalytic subunit A (623 aa).

252-259 serves as a coordination point for ATP; that stretch reads GAFGCGKT.

The protein belongs to the ATPase alpha/beta chains family. In terms of assembly, V-ATPase is a heteromultimeric enzyme composed of a peripheral catalytic V1 complex (main components: subunits A, B, C, D, E, and F) attached to an integral membrane V0 proton pore complex (main component: the proteolipid protein).

The catalysed reaction is ATP + H2O + 4 H(+)(in) = ADP + phosphate + 5 H(+)(out). Functionally, catalytic subunit of the peripheral V1 complex of vacuolar ATPase. V-ATPase vacuolar ATPase is responsible for acidifying a variety of intracellular compartments in eukaryotic cells. This is V-type proton ATPase catalytic subunit A from Beta vulgaris (Sugar beet).